The following is a 415-amino-acid chain: DNA polymerase IV 2 (415 aa).

The UmuC domain occupies 7–183; sequence ILHADLDAFY…LPVSLMWGVG (177 aa). The Mg(2+) site is built by aspartate 11 and aspartate 101. Glutamate 102 is a catalytic residue.

Belongs to the DNA polymerase type-Y family. In terms of assembly, monomer. The cofactor is Mg(2+).

It is found in the cytoplasm. It catalyses the reaction DNA(n) + a 2'-deoxyribonucleoside 5'-triphosphate = DNA(n+1) + diphosphate. Poorly processive, error-prone DNA polymerase involved in untargeted mutagenesis. Copies undamaged DNA at stalled replication forks, which arise in vivo from mismatched or misaligned primer ends. These misaligned primers can be extended by PolIV. Exhibits no 3'-5' exonuclease (proofreading) activity. May be involved in translesional synthesis, in conjunction with the beta clamp from PolIII. This chain is DNA polymerase IV 2 (dinB2), found in Mesorhizobium japonicum (strain LMG 29417 / CECT 9101 / MAFF 303099) (Mesorhizobium loti (strain MAFF 303099)).